Here is a 501-residue protein sequence, read N- to C-terminus: Aldehyde dehydrogenase 1A1 (501 aa).

At Ser-2 the chain carries N-acetylserine. N6-acetyllysine is present on residues Lys-91 and Lys-128. NAD(+) contacts are provided by residues 167 to 170 (IPWN), 193 to 196 (KPAE), 226 to 227 (GP), and 246 to 247 (GS). Lys-252 carries the post-translational modification N6-acetyllysine. Catalysis depends on Glu-269, which acts as the Proton acceptor. 269 to 271 (ELG) contributes to the NAD(+) binding site. Residue Cys-303 is the Nucleophile of the active site. Residues 336-501 (LTPGVSQGPQ…VTIKISQKNS (166 aa)) form a mediates interaction with PRMT3 region. Thr-337 carries the post-translational modification Phosphothreonine. 349–353 (EQYEK) serves as a coordination point for NAD(+). N6-acetyllysine occurs at positions 353 and 367. 400-402 (EIF) provides a ligand contact to NAD(+). Lys-410 is modified (N6-acetyllysine). Residue Ser-413 is modified to Phosphoserine. An N6-acetyllysine mark is found at Lys-419 and Lys-495.

The protein belongs to the aldehyde dehydrogenase family. As to quaternary structure, homotetramer. Interacts with PRMT3; the interaction is direct, inhibits ALDH1A1 aldehyde dehydrogenase activity and is independent of the methyltransferase activity of PRMT3. The N-terminus is blocked most probably by acetylation. Expressed in muscle, liver, small intestine, kidney, brain, lung, heart but not detected in erythrocytes (at protein level).

The protein resides in the cytoplasm. It localises to the cytosol. The protein localises to the cell projection. Its subcellular location is the axon. It carries out the reaction an aldehyde + NAD(+) + H2O = a carboxylate + NADH + 2 H(+). The catalysed reaction is all-trans-retinal + NAD(+) + H2O = all-trans-retinoate + NADH + 2 H(+). The enzyme catalyses 9-cis-retinal + NAD(+) + H2O = 9-cis-retinoate + NADH + 2 H(+). It catalyses the reaction 11-cis-retinal + NAD(+) + H2O = 11-cis-retinoate + NADH + 2 H(+). It carries out the reaction 13-cis-retinal + NAD(+) + H2O = 13-cis-retinoate + NADH + 2 H(+). The catalysed reaction is 3-deoxyglucosone + NAD(+) + H2O = 2-dehydro-3-deoxy-D-gluconate + NADH + 2 H(+). The enzyme catalyses (E)-4-hydroxynon-2-enal + NAD(+) + H2O = (E)-4-hydroxynon-2-enoate + NADH + 2 H(+). It catalyses the reaction malonaldehyde + NAD(+) + H2O = 3-oxopropanoate + NADH + 2 H(+). It carries out the reaction hexanal + NAD(+) + H2O = hexanoate + NADH + 2 H(+). The catalysed reaction is propanal + NAD(+) + H2O = propanoate + NADH + 2 H(+). The enzyme catalyses acetaldehyde + NAD(+) + H2O = acetate + NADH + 2 H(+). It catalyses the reaction benzaldehyde + NAD(+) + H2O = benzoate + NADH + 2 H(+). It carries out the reaction 4-aminobutanal + NAD(+) + H2O = 4-aminobutanoate + NADH + 2 H(+). It participates in cofactor metabolism; retinol metabolism. Cytosolic dehydrogenase that catalyzes the irreversible oxidation of a wide range of aldehydes to their corresponding carboxylic acid. Functions downstream of retinol dehydrogenases and catalyzes the oxidation of retinaldehyde into retinoic acid, the second step in the oxidation of retinol/vitamin A into retinoic acid. This pathway is crucial to control the levels of retinol and retinoic acid, two important molecules which excess can be teratogenic and cytotoxic. Also oxidizes aldehydes resulting from lipid peroxidation like (E)-4-hydroxynon-2-enal/HNE, malonaldehyde and hexanal that form protein adducts and are highly cytotoxic. By participating for instance to the clearance of (E)-4-hydroxynon-2-enal/HNE in the lens epithelium prevents the formation of HNE-protein adducts and lens opacification. Also functions downstream of fructosamine-3-kinase in the fructosamine degradation pathway by catalyzing the oxidation of 3-deoxyglucosone, the carbohydrate product of fructosamine 3-phosphate decomposition, which is itself a potent glycating agent that may react with lysine and arginine side-chains of proteins. Also has an aminobutyraldehyde dehydrogenase activity and is probably part of an alternative pathway for the biosynthesis of GABA/4-aminobutanoate in midbrain, thereby playing a role in GABAergic synaptic transmission. The polypeptide is Aldehyde dehydrogenase 1A1 (Bos taurus (Bovine)).